The chain runs to 174 residues: RNA pyrophosphohydrolase (174 aa).

In terms of domain architecture, Nudix hydrolase spans 6-145 (GYRPNVGMII…KRRVYWQALQ (140 aa)). The short motif at 38 to 59 (GGIDYAETPEQAMFRELEEEVG) is the Nudix box element.

This sequence belongs to the Nudix hydrolase family. RppH subfamily. Requires a divalent metal cation as cofactor.

Accelerates the degradation of transcripts by removing pyrophosphate from the 5'-end of triphosphorylated RNA, leading to a more labile monophosphorylated state that can stimulate subsequent ribonuclease cleavage. This chain is RNA pyrophosphohydrolase, found in Acidithiobacillus ferrooxidans (strain ATCC 53993 / BNL-5-31) (Leptospirillum ferrooxidans (ATCC 53993)).